A 64-amino-acid chain; its full sequence is Large ribosomal subunit protein uL29 (64 aa).

It belongs to the universal ribosomal protein uL29 family.

The sequence is that of Large ribosomal subunit protein uL29 from Polynucleobacter necessarius subsp. necessarius (strain STIR1).